A 349-amino-acid polypeptide reads, in one-letter code: GDSL esterase/lipase At2g19060 (349 aa).

Residues 1–25 (MADKMFKALLWAFATAVVMAEAVRG) form the signal peptide. The Nucleophile role is filled by S37. Residue N178 is glycosylated (N-linked (GlcNAc...) asparagine). Active-site residues include D317 and H320.

The protein belongs to the 'GDSL' lipolytic enzyme family.

Its subcellular location is the secreted. The sequence is that of GDSL esterase/lipase At2g19060 from Arabidopsis thaliana (Mouse-ear cress).